The following is a 422-amino-acid chain: Gamma-glutamyl phosphate reductase (422 aa).

The protein belongs to the gamma-glutamyl phosphate reductase family.

It is found in the cytoplasm. It carries out the reaction L-glutamate 5-semialdehyde + phosphate + NADP(+) = L-glutamyl 5-phosphate + NADPH + H(+). Its pathway is amino-acid biosynthesis; L-proline biosynthesis; L-glutamate 5-semialdehyde from L-glutamate: step 2/2. Its function is as follows. Catalyzes the NADPH-dependent reduction of L-glutamate 5-phosphate into L-glutamate 5-semialdehyde and phosphate. The product spontaneously undergoes cyclization to form 1-pyrroline-5-carboxylate. The protein is Gamma-glutamyl phosphate reductase of Chlorobium phaeovibrioides (strain DSM 265 / 1930) (Prosthecochloris vibrioformis (strain DSM 265)).